Consider the following 335-residue polypeptide: Probable cyclin-H (335 aa).

Belongs to the cyclin family. Cyclin C subfamily.

It is found in the nucleus. Regulates CDK7, the catalytic subunit of the CDK-activating kinase (CAK) enzymatic complex. This chain is Probable cyclin-H (CYCH), found in Echinococcus multilocularis (Fox tapeworm).